The chain runs to 656 residues: Protein teflon (656 aa).

A C2H2-type 1 zinc finger spans residues 33–56 (LYCHFCRDLFTQLPEFLRHLQSNH). Residues 80 to 131 (DKAHEDAQSAGHNSSSGDSRSLMNSEDSRAIDGSEENSDNSPVKPEQIGKQN) are disordered. Residues 89–104 (AGHNSSSGDSRSLMNS) show a composition bias toward polar residues. C2H2-type zinc fingers lie at residues 606-628 (YFCK…LISH) and 632-655 (FQCT…RNAH).

The protein belongs to the Teflon family.

It localises to the nucleus. The protein localises to the chromosome. Specifically required in males for proper segregation of autosomal bivalents at meiosis I. Expression is required in the male germ line prior to spermatocyte stage S4. May have a role as a bridging molecule maintaining adhesion to hold autosome bivalents together via heterochromatic connections. The protein is Protein teflon of Drosophila sechellia (Fruit fly).